We begin with the raw amino-acid sequence, 862 residues long: Putative cargo-transport protein ypp1 (862 aa).

3 TPR repeats span residues 342-377 (QQIFRSLVFFLRHIEEFEEASEAFEIYKFLCVKSHE), 460-493 (SFMYYQANNPSLRERYHQKSVQSYQKCLEKQPTN), and 494-527 (TNALFHLAMQYSERRAITDAMQIVRRLLEVNPKY). A phosphoserine mark is found at serine 632, serine 633, and serine 637. TPR repeat units follow at residues 665–698 (ILGFSRKSSLKRSTVLSKKSHSSYKENFQLRRGK), 705–738 (QKLWLTAASLFLKSGNDDQARSALLEAKKIDHEC), 740–772 (WVYYLNGLSLLQQGKEVEGYEQLDVAHYLDPED), and 814–847 (PEAWYYTAEIFRQLGDLKQAAFSYDYCIQLADTN).

The protein belongs to the YPP1 family.

The protein resides in the cytoplasm. Involved in endocytosis. This is Putative cargo-transport protein ypp1 (ypp1) from Schizosaccharomyces pombe (strain 972 / ATCC 24843) (Fission yeast).